The following is a 785-amino-acid chain: Putative endonuclease MutS2 (785 aa).

G335 to T342 is an ATP binding site. Residues T513 to E586 adopt a coiled-coil conformation. The tract at residues K636–K785 is partially complements a deletion for mitomycin C (MMC) resistance and for chromosomal DNA transformation. The interval P641–L681 is KOW region. The region spanning L710–K785 is the Smr domain.

This sequence belongs to the DNA mismatch repair MutS family. MutS2 subfamily. As to quaternary structure, binds to ribosomes as a homodimer. Binds to stalled/collided disomes, association is greater in (ribosome-targeted) antibiotic-treated cells (with increased stalling at specific mRNA sites). The clamp domain of one monomer binds the A-site finger, the 23S rRNA of the central protuberance and ribosomal protein uL5 of the leading (stalled) ribosome, while the other monomer binds in a gap between the ribosomal central protuberance and the L1 stalk of the leading ribosome.

Its subcellular location is the cytoplasm. Its function is as follows. Acts as a ribosome collision sensor splitting the ribosome into its 2 subunits. Detects stalled/collided disomes (pairs of ribosomes where the leading ribosome is stalled and a second ribosome has collided with it) which it binds and splits, by an ATP-hydrolysis driven conformational change. Does not seem to have endoribonuclease activity (in the context of ribosome stalling). Acts upstream of the ribosome quality control system (RQC), a ribosome-associated complex that mediates the extraction of incompletely synthesized nascent chains from stalled ribosomes and their subsequent degradation, probably generates substrates for RQC. Functionally, does not seem to be involved in mismatch repair or in the prevention of interspecific recombination during DNA transformation. Might be involved in homologous recombination. Putative endonuclease that may be involved in the suppression of homologous recombination and may therefore have a key role in the control of bacterial genetic diversity. The chain is Putative endonuclease MutS2 from Bacillus subtilis (strain 168).